Here is a 113-residue protein sequence, read N- to C-terminus: Putative increased recombination centers protein 14 (113 aa).

The protein is Putative increased recombination centers protein 14 (IRC14) of Saccharomyces cerevisiae (strain ATCC 204508 / S288c) (Baker's yeast).